The sequence spans 22 residues: Large ribosomal subunit protein bL32 (22 aa).

Positions 1-22 (CVPKRKVSPSXRNMRXAHDXLT) are disordered.

Belongs to the bacterial ribosomal protein bL32 family.

The polypeptide is Large ribosomal subunit protein bL32 (rpmF) (Brevundimonas vesicularis (Pseudomonas vesicularis)).